The primary structure comprises 442 residues: Urokinase-type plasminogen activator (442 aa).

A signal peptide spans Met-1–Gly-20. Positions Gly-29 to Glu-65 constitute an EGF-like domain. Cystine bridges form between Cys-33-Cys-41, Cys-35-Cys-53, Cys-55-Cys-64, Cys-72-Cys-153, Cys-93-Cys-135, Cys-124-Cys-148, Cys-179-Cys-310, Cys-220-Cys-236, Cys-228-Cys-299, Cys-324-Cys-393, Cys-356-Cys-372, and Cys-383-Cys-411. A binds urokinase plasminogen activator surface receptor region spans residues Leu-36–Phe-59. One can recognise a Kringle domain in the interval Cys-72–Cys-153. N-linked (GlcNAc...) asparagine glycosylation occurs at Asn-152. A connecting peptide region spans residues Ser-154 to Lys-189. The Peptidase S1 domain maps to Ile-190 to Gly-435. Residues His-235 and Asp-286 each act as charge relay system in the active site. Ser-387 (charge relay system) is an active-site residue.

It belongs to the peptidase S1 family. As to quaternary structure, found in high and low molecular mass forms. Each consists of two chains, A and B. The high molecular mass form contains a long chain A which is cleaved to yield a short chain A. Forms heterodimer with SERPINA5. Binds LRP1B; binding is followed by internalization and degradation. Interacts with MRC2. Interacts with PLAUR. In complex with SERPINE1, interacts with PLAUR/uPAR. Interacts with SORL1 and LRP1, either alone or in complex with SERPINE1; these interactions are abolished in the presence of LRPAP1/RAP. The ternary complex composed of PLAUR-PLAU-PAI1 also interacts with SORLA. In terms of processing, produced as an inactive single-chain protein (pro-uPA or sc-uPA), is processed into the active disulfide-linked two-chain form of PLAU/uPA by a proteolytic event mediated, at least, by TMPRSS4.

It is found in the secreted. The catalysed reaction is Specific cleavage of Arg-|-Val bond in plasminogen to form plasmin.. With respect to regulation, inhibited by SERPINA5. Inhibited by SERPINE1. In terms of biological role, specifically cleaves the zymogen plasminogen to form the active enzyme plasmin. In Sus scrofa (Pig), this protein is Urokinase-type plasminogen activator (PLAU).